The sequence spans 50 residues: Protein PndA (50 aa).

A helical membrane pass occupies residues 5–25 (TFLMMLIVVCVTILCFVWMVR).

The protein belongs to the Hok/Gef family.

It is found in the cell inner membrane. Its function is as follows. When overexpressed kill the cells from the inside by interfering with a vital function in the cell membrane. Functionally, toxic component of a type I toxin-antitoxin (TA) system. When expressed is involved in cellular Mg(2+) release and degradation of stable RNA. This chain is Protein PndA (pndA), found in Escherichia coli.